Here is a 638-residue protein sequence, read N- to C-terminus: UvrABC system protein C (638 aa).

Residues 20–97 (ECAGVYQMFD…IKKFQPKFNI (78 aa)) enclose the GIY-YIG domain. The 36-residue stretch at 209–244 (KELQENLSKKMEELSSHMYFEEAAEIRDRIKALSYV) folds into the UVR domain.

Belongs to the UvrC family. Interacts with UvrB in an incision complex.

It localises to the cytoplasm. Its function is as follows. The UvrABC repair system catalyzes the recognition and processing of DNA lesions. UvrC both incises the 5' and 3' sides of the lesion. The N-terminal half is responsible for the 3' incision and the C-terminal half is responsible for the 5' incision. The polypeptide is UvrABC system protein C (Rickettsia canadensis (strain McKiel)).